Consider the following 324-residue polypeptide: Lactonase drp35 (324 aa).

Ca(2+) contacts are provided by Glu-47, Ser-109, Gly-111, Asp-129, Thr-132, Tyr-134, Asp-137, Asn-184, Asp-235, and Ser-236. Catalysis depends on Asp-235, which acts as the Proton donor.

It belongs to the SMP-30/CGR1 family. The cofactor is Ca(2+).

The protein resides in the cytoplasm. In terms of biological role, exhibits lactonase activity. Acts in cells with perturbed membrane integrity and is possibly related to the membrane homeostasis. This is Lactonase drp35 (drp35) from Staphylococcus saprophyticus subsp. saprophyticus (strain ATCC 15305 / DSM 20229 / NCIMB 8711 / NCTC 7292 / S-41).